Consider the following 186-residue polypeptide: Dual-action ribosomal maturation protein DarP (186 aa).

This sequence belongs to the DarP family.

It is found in the cytoplasm. In terms of biological role, member of a network of 50S ribosomal subunit biogenesis factors which assembles along the 30S-50S interface, preventing incorrect 23S rRNA structures from forming. Promotes peptidyl transferase center (PTC) maturation. This Proteus mirabilis (strain HI4320) protein is Dual-action ribosomal maturation protein DarP.